The following is a 151-amino-acid chain: FAD synthase (151 aa).

ATP-binding positions include 12–13 (TF), 17–20 (HPGH), aspartate 97, and tyrosine 125.

It belongs to the archaeal FAD synthase family. As to quaternary structure, homodimer. A divalent metal cation serves as cofactor.

It catalyses the reaction FMN + ATP + H(+) = FAD + diphosphate. It functions in the pathway cofactor biosynthesis; FAD biosynthesis; FAD from FMN: step 1/1. In terms of biological role, catalyzes the transfer of the AMP portion of ATP to flavin mononucleotide (FMN) to produce flavin adenine dinucleotide (FAD) coenzyme. The protein is FAD synthase of Methanococcus vannielii (strain ATCC 35089 / DSM 1224 / JCM 13029 / OCM 148 / SB).